We begin with the raw amino-acid sequence, 837 residues long: MANILKTIIENDKGEIRRLEKMADKVFKYEDQMAALTDDQLKAKTVEFKERYQNGESLDSLLYEAFAVVREGAKRVLGLFPYKVQVMGGIVLHHGDVPEMRTGEGKTLTATMPVYLNALSGKGVHVVTVNEYLSERDATEMGELYSWLGLSVGINLATKSPMEKKEAYECDITYSTNSEIGFDYLRDNMVVRAENMVQRPLNYALVDEVDSILIDEARTPLIVSGANAVETSQLYHMADHYVKSLNKDDYIIDVQSKTIGLSDSGIDRAESYFKLENLYDIENVALTHFIDNALRANYIMLLDIDYVVSEEQEILIVDQFTGRTMEGRRYSDGLHQAIEAKEGVPIQDETKTSASITYQNLFRMYKKLSGMTGTGKTEEEEFREIYNIRVIPIPTNRPVQRIDHSDLLYASIESKFKAVVEDVKARYQKGQPVLVGTVAVETSDYISKKLVAAGVPHEVLNAKNHYREAQIIMNAGQRGAVTIATNMAGRGTDIKLGEGVRELGGLCVIGTERHESRRIDNQLRGRSGRQGDPGESQFYLSLEDDLMKRFGSERLKGIFERLNMSEEAIESRMLTRQVEAAQKRVEGNNYDTRKQVLQYDDVMREQREIIYAQRYDVITADRDLAPEIQSMIKRTIERVVDGHARAKQDEKLEAILNFAKYNLLPEDSITMEDLSGLSDKAIKEELFQRSLKVYDSQVSKLRDEEAVKEFQKVLILRVVDNKWTDHIDALDQLRNAVGLRGYAQNNPVVEYQAEGFRMFNDMIGSIEFDVTRLMMKAQIHEQERPQAERHISTTATRNIAAHQASMPEDLDLSQIGRNELCPCGSGKKFKNCHGKRQ.

ATP contacts are provided by residues Gln85, 103–107 (GEGKT), and Asp493. The Zn(2+) site is built by Cys821, Cys823, Cys832, and His833.

The protein belongs to the SecA family. As to quaternary structure, monomer and homodimer. Part of the essential Sec protein translocation apparatus which comprises SecA, SecYEG and auxiliary proteins SecDF. Other proteins may also be involved. Zn(2+) is required as a cofactor.

It localises to the cell membrane. Its subcellular location is the cytoplasm. The catalysed reaction is ATP + H2O + cellular proteinSide 1 = ADP + phosphate + cellular proteinSide 2.. Functionally, part of the Sec protein translocase complex. Interacts with the SecYEG preprotein conducting channel. Has a central role in coupling the hydrolysis of ATP to the transfer of proteins into and across the cell membrane, serving as an ATP-driven molecular motor driving the stepwise translocation of polypeptide chains across the membrane. The protein is Protein translocase subunit SecA 1 of Streptococcus pneumoniae serotype 4 (strain ATCC BAA-334 / TIGR4).